Here is a 61-residue protein sequence, read N- to C-terminus: Large ribosomal subunit protein bL28 (61 aa).

The protein belongs to the bacterial ribosomal protein bL28 family.

The chain is Large ribosomal subunit protein bL28 from Nautilia profundicola (strain ATCC BAA-1463 / DSM 18972 / AmH).